The primary structure comprises 360 residues: Peptide chain release factor 1 (360 aa).

Gln237 bears the N5-methylglutamine mark.

The protein belongs to the prokaryotic/mitochondrial release factor family. In terms of processing, methylated by PrmC. Methylation increases the termination efficiency of RF1.

Its subcellular location is the cytoplasm. Functionally, peptide chain release factor 1 directs the termination of translation in response to the peptide chain termination codons UAG and UAA. This chain is Peptide chain release factor 1, found in Pseudomonas putida (strain GB-1).